A 439-amino-acid chain; its full sequence is MKYSLPTTATAPFCPSAVSHSVAVPADASPLRKLALFVGPGLLVSVGYMDPGNWATAIEAGSRFGYALLFVVVLASFSGMLLQSLCSRLGIATGRDLAQLSRERYRPGVARGQWLLAELSIVATDLAEVLGAALAFHLLLGVSITTGVVLTAFDTLIVLALQGANFRRLEAIVLGLIATIGACFFVELVLIGPYWPDVAAGLRPSWDTLSSQEPLYLAIGILGATVMPHNLYLHSSVVQTRVSGDDAASKRSAIRFSRLDTIGSLSLALLVNAAILILAAAAFHGSGHTEVVEIQDAYHLLDPLVGGALASFLFGFALLAAGQSSTFTGTIAGQVVMEGFLRAKIPCWQRRLITRGLALVPALIGVLWLGEAAVGKLLVLSQVVLSLQLPFALWPLIRFSSDRGLMGEFVNPRWVSALAWSLFGLISAANLTLLYFWFG.

Transmembrane regions (helical) follow at residues 64-84 (FGYALLFVVVLASFSGMLLQS), 139-161 (LLGVSITTGVVLTAFDTLIVLAL), 171-191 (AIVLGLIATIGACFFVELVLI), 214-234 (PLYLAIGILGATVMPHNLYLH), 262-282 (IGSLSLALLVNAAILILAAAA), 300-320 (LLDPLVGGALASFLFGFALLA), 359-379 (LVPALIGVLWLGEAAVGKLLV), 380-400 (LSQVVLSLQLPFALWPLIRFS), and 418-438 (LAWSLFGLISAANLTLLYFWF).

Belongs to the NRAMP family.

It localises to the cell inner membrane. In terms of biological role, h(+)-stimulated, divalent metal cation uptake system. The protein is Divalent metal cation transporter MntH 1 of Pseudomonas aeruginosa (strain ATCC 15692 / DSM 22644 / CIP 104116 / JCM 14847 / LMG 12228 / 1C / PRS 101 / PAO1).